The sequence spans 588 residues: Ufm1-specific protease (588 aa).

Catalysis depends on residues C420, D544, and H546.

Belongs to the peptidase C78 family. In terms of assembly, interacts with odr-4.

It localises to the endoplasmic reticulum membrane. Its subcellular location is the cytoplasm. The protein resides in the perinuclear region. In terms of biological role, thiol protease which recognizes and hydrolyzes the peptide bond at the C-terminal Gly of ufm-1, a ubiquitin-like modifier protein bound to a number of target proteins. Required, with oct-4, for the localization of a subset of 7 transmembrane domain odorant receptors, including odr-10, to the cilia of olfactory neurons AWA and AWC. Operates in aggregation behavior, and responses to oxygen levels. In Caenorhabditis briggsae, this protein is Ufm1-specific protease.